The primary structure comprises 1754 residues: Collagen alpha-1(XVIII) chain (1754 aa).

The signal sequence occupies residues 1 to 23 (MAPYPCGCHILLLLFCCLAAARA). The tract at residues 42 to 104 (ATTIPEPQGP…TSAESPDAPE (63 aa)) is disordered. Residues 57-73 (TADTTTHVTPRNGSTEP) show a composition bias toward polar residues. N-linked (GlcNAc...) asparagine glycans are attached at residues N68, N129, and N164. The interval 152–256 (LALAGPSSTP…APSQQLQRPD (105 aa)) is disordered. Residues 157–169 (PSSTPQENGTTLW) show a composition bias toward polar residues. Low complexity predominate over residues 215–253 (SGRASLSSLLGGAPPWGSLQDPDSQGLSPAAAAPSQQLQ). The FZ domain maps to 329-446 (APAGRCLPLP…TQEDGYCVLI (118 aa)). Disulfide bonds link C334/C397, C344/C390, C381/C419, C408/C443, and C412/C432. The Laminin G-like domain occupies 456 to 644 (EVGLLQLLGD…IAELKVRRDP (189 aa)). Residues 645–751 (QVSPMHCLDE…RTPGGRVKEG (107 aa)) form a nonhelical region 1 (NC1) region. The interval 645–1443 (QVSPMHCLDE…GPPGTMGASS (799 aa)) is disordered. Basic and acidic residues predominate over residues 672–681 (DARELLREET). At T696 the chain carries Phosphothreonine. Polar residues predominate over residues 717–738 (QTTVASLGAQTLPGSDSVSTWD). A triple-helical region 1 (COL1) region spans residues 752 to 785 (GLKGQKGEPGVPGPPGRAGPPGSPCLPGPPGLPC). A compositionally biased stretch (pro residues) spans 762-789 (VPGPPGRAGPPGSPCLPGPPGLPCPVSP). A nonhelical region 2 (NC2) region spans residues 786 to 795 (PVSPLGPAGP). Residues 796-875 (ALQTVPGPQG…QGPPGPPGPS (80 aa)) are triple-helical region 2 (COL2). Basic and acidic residues predominate over residues 815 to 831 (TPGRDGEPGDPGEDGKP). Residues 833–846 (DTGPQGFPGTPGDV) are compositionally biased toward low complexity. Pro residues predominate over residues 862–874 (PPGPQGPPGPPGP). The interval 876–899 (FRHDKLTFIDMEGSGFGGDLEALR) is nonhelical region 3 (NC3). O-linked (Xyl...) (chondroitin sulfate) serine glycosylation occurs at S889. The segment at 900–1021 (GPRGFPGPPG…PGPPGPPGPG (122 aa)) is triple-helical region 3 (COL3). Residues 904–914 (FPGPPGPPGVP) are compositionally biased toward pro residues. The N-linked (GlcNAc...) asparagine glycan is linked to N926. A compositionally biased stretch (low complexity) spans 930 to 942 (VPGPAGLPGVPGR). Residues 946–961 (PGFPGLPGPPGPPGRE) show a composition bias toward pro residues. Residues 976–1003 (AGAPGHKGSKGAPGPAGARGESGLAGAP) are compositionally biased toward low complexity. Residues 1005–1021 (PAGPPGPPGPPGPPGPG) show a composition bias toward pro residues. Residues 1022–1044 (LPAGFDDMEGSGGPFWSTARSAD) are nonhelical region 4 (NC4). Residues 1045–1127 (GPQGPPGLPG…PGPPGPPGPV (83 aa)) form a triple-helical region 4 (COL4) region. Low complexity predominate over residues 1053–1065 (PGLKGDPGVPGLP). Positions 1095-1109 (KGDRGSRGEKGDPGK) are enriched in basic and acidic residues. A compositionally biased stretch (pro residues) spans 1117-1126 (LPGPPGPPGP). The tract at residues 1128 to 1141 (VYVSEQDGSVLSVP) is nonhelical region 5 (NC5). The segment covering 1141–1153 (PGPEGRPGFAGFP) has biased composition (low complexity). Residues 1142–1183 (GPEGRPGFAGFPGPAGPKGNLGSKGERGSPGPKGEKGEPGSI) are triple-helical region 5 (COL5). The segment at 1184 to 1196 (FSPDGGALGPAQK) is nonhelical region 6 (NC6). Positions 1197–1269 (GAKGEPGFRG…PGPPGPPGTP (73 aa)) are triple-helical region 6 (COL6). Over residues 1254–1268 (PGPPGPPGPPGPPGT) the composition is skewed to pro residues. Residues 1270–1279 (VYDSNVFAES) are nonhelical region 7 (NC7). The segment at 1280–1312 (SRPGPPGLPGNQGPPGPKGAKGEVGPPGPPGQF) is triple-helical region 7 (COL7). Residues 1282 to 1296 (PGPPGLPGNQGPPGP) show a composition bias toward pro residues. The segment at 1313–1324 (PFDFLQLEAEMK) is nonhelical region 8 (NC8). Residues 1321–1341 (AEMKGEKGDRGDAGQKGERGE) show a composition bias toward basic and acidic residues. The interval 1325–1346 (GEKGDRGDAGQKGERGEPGGGG) is triple-helical region 8 (COL8). The short motif at 1330–1332 (RGD) is the Cell attachment site element. Residues 1347–1353 (FFGSSLP) form a nonhelical region 9 (NC9) region. 3 stretches are compositionally biased toward pro residues: residues 1353–1365 (PGPP…PGPR), 1401–1414 (PPGP…PSFP), and 1424–1436 (PGPP…PGPP). The triple-helical region 9 (COL9) stretch occupies residues 1354 to 1411 (GPPGPPGPPGPRGYPGIPGPKGESIRGQPGPPGPQGPPGIGYEGRQGPPGPPGPPGPP). Residues 1412–1424 (SFPGPHRQTISVP) form a nonhelical region 10 (NC10) region. The triple-helical region 10 (COL10) stretch occupies residues 1425–1442 (GPPGPPGPPGPPGTMGAS). The nonhelical region 11 (NC11) stretch occupies residues 1443-1754 (SGVRLWATRQ…IENSFMTASK (312 aa)). The tract at residues 1456-1501 (GQVHEVPEGWLIFVAEQEELYVRVQNGFRKVQLEARTPLPRGTDNE) is non-collagenous domain 1 association domain. Residues 1502–1571 (VAALQPPVVQ…RPARPTSPPA (70 aa)) form a non-collagenous domain 1 hinge region region. The segment at 1511 to 1556 (QLHDSNPYPRREHPHPTARPWRADDILASPPRLPEPQPYPGAPHHS) is disordered. Residues 1519–1535 (PRREHPHPTARPWRADD) show a composition bias toward basic and acidic residues. Over residues 1541–1551 (PRLPEPQPYPG) the composition is skewed to pro residues. O-linked (GalNAc...) threonine glycosylation is present at T1567. Residues H1572, H1574, H1582, and D1647 each contribute to the Zn(2+) site. 2 disulfides stabilise this stretch: C1604–C1744 and C1706–C1736.

Belongs to the multiplexin collagen family. Forms homotrimers. Recombinant non-collagenous domain 1 has stronger affinity to NID1, HSPG2 and laminin-1:NID1 complex and lower affinity to FBLN1 and FBLN2 than endostatin. In terms of assembly, monomeric. Interacts with KDR/VEGFR2. Interacts with the ITGA5:ITGB1 complex. Interacts with NID1, HSPG2, laminin-1:NID1 complex, FBLN1 and FBLN2. In terms of processing, prolines at the third position of the tripeptide repeating unit (G-X-Y) of the triple-helical regions are hydroxylated. Circulating endostatins are found as sialoglycoprotein and asialoglycoprotein structures. Post-translationally, undergoes proteolytic processing by CTSL/cathepsin-L and elastase-like proteases to generate both non-collagenous domain 1 trimers and endostatin monomers. In tissue extracts (brain, skeletal muscle, heart, kidney, testis and liver) predominantly bands of approximately 38 kDa are detected; recombinant non-collagenous domain 1 shows similar mobility. In vitro, several proteolytic cleavage sites in the non-collagenous domain 1 hinge region generating different endostatin-like peptides are reported. Detected in placenta (at protein level). Present in multiple organs with highest levels in liver, lung and kidney.

It localises to the secreted. Its subcellular location is the extracellular space. The protein localises to the extracellular matrix. It is found in the basement membrane. In terms of biological role, probably plays a major role in determining the retinal structure as well as in the closure of the neural tube. Functionally, may regulate extracellular matrix-dependent motility and morphogenesis of endothelial and non-endothelial cells; the function requires homotrimerization and implicates MAPK signaling. Its function is as follows. Potently inhibits endothelial cell proliferation and angiogenesis. May inhibit angiogenesis by binding to the heparan sulfate proteoglycans involved in growth factor signaling. Inhibits VEGFA-induced endothelial cell proliferation and migration. Seems to inhibit VEGFA-mediated signaling by blocking the interaction of VEGFA to its receptor KDR/VEGFR2. Modulates endothelial cell migration in an integrin-dependent manner implicating integrin ITGA5:ITGB1 and to a lesser extent ITGAV:ITGB3 and ITGAV:ITGB5. May negatively regulate the activity of homotrimeric non-collagenous domain 1. This Homo sapiens (Human) protein is Collagen alpha-1(XVIII) chain.